The primary structure comprises 248 residues: Granzyme C (248 aa).

A signal peptide spans 1–18 (MPPVLILLTLLLPLRAGA). Residues 19–20 (EE) constitute a propeptide that is removed on maturation. Residues 21–246 (IIGGNEISPH…FVSWIKKTMK (226 aa)) form the Peptidase S1 domain. Cysteines 50 and 66 form a disulfide. Residues His65 and Asp109 each act as charge relay system in the active site. Cystine bridges form between Cys143/Cys210 and Cys174/Cys189. The Charge relay system role is filled by Ser204.

Belongs to the peptidase S1 family. Granzyme subfamily.

Its subcellular location is the cytolytic granule. This enzyme is probably necessary for target cell lysis in cell-mediated immune responses. This is Granzyme C (Gzmc) from Mus musculus (Mouse).